A 421-amino-acid polypeptide reads, in one-letter code: Inhibitor of growth protein 3 (421 aa).

The tract at residues 129-163 (PSQPVNNHHAHSHTPVEKRKYNPTSHHAAADHIPE) is disordered. Residues Lys-148, Lys-165, and Lys-167 each participate in a glycyl lysine isopeptide (Lys-Gly) (interchain with G-Cter in SUMO2) cross-link. N6-acetyllysine is present on Lys-181. A Glycyl lysine isopeptide (Lys-Gly) (interchain with G-Cter in SUMO2) cross-link involves residue Lys-256. N6-acetyllysine is present on Lys-264. The segment covering 286-296 (TQNASSSATDS) has biased composition (polar residues). Residues 286–323 (TQNASSSATDSRSGRKSKNNTKSSSQQSSSSSSSSSSS) form a disordered region. The span at 308-323 (SSSQQSSSSSSSSSSS) shows a compositional bias: low complexity. The PHD-type zinc-finger motif lies at 363–412 (PRYCICNQVSYGEMVGCDNQDCPIEWFHYGCVGLTEAPKGKWFCPQCTAA). Residues Cys-366, Cys-368, Cys-379, Cys-384, His-390, Cys-393, Cys-406, and Cys-409 each coordinate Zn(2+).

The protein belongs to the ING family. As to quaternary structure, interacts with H3K4me3 and to a lesser extent with H3K4me2. Component of the NuA4 histone acetyltransferase complex which contains the catalytic subunit KAT5/TIP60 and the subunits EP400, TRRAP/PAF400, BRD8/SMAP, EPC1, DMAP1/DNMAP1, RUVBL1/TIP49, RUVBL2, ING3, actin, ACTL6A/BAF53A, MORF4L1/MRG15, MORF4L2/MRGX, MRGBP, YEATS4/GAS41, VPS72/YL1 and MEAF6. The NuA4 complex interacts with MYC. HTATTIP/TIP60, EPC1, and ING3 together constitute a minimal HAT complex termed Piccolo NuA4. Component of a SWR1-like complex.

The protein localises to the nucleus. Its function is as follows. Component of the NuA4 histone acetyltransferase (HAT) complex which is involved in transcriptional activation of select genes principally by acetylation of nucleosomal histones H4 and H2A. This modification may both alter nucleosome - DNA interactions and promote interaction of the modified histones with other proteins which positively regulate transcription. This complex may be required for the activation of transcriptional programs associated with oncogene and proto-oncogene mediated growth induction, tumor suppressor mediated growth arrest and replicative senescence, apoptosis, and DNA repair. NuA4 may also play a direct role in DNA repair when directly recruited to sites of DNA damage. Component of a SWR1-like complex that specifically mediates the removal of histone H2A.Z/H2AZ1 from the nucleosome. The polypeptide is Inhibitor of growth protein 3 (Ing3) (Mus musculus (Mouse)).